A 178-amino-acid chain; its full sequence is CDP-archaeol synthase (178 aa).

5 helical membrane passes run 3–23 (IIYL…ANAT), 55–75 (TFFG…IFNL), 91–111 (GIVG…GSFI), 125–145 (ILDQ…FAPV), and 149–169 (MGIF…IIAY).

Belongs to the CDP-archaeol synthase family. Requires Mg(2+) as cofactor.

The protein resides in the cell membrane. It catalyses the reaction 2,3-bis-O-(geranylgeranyl)-sn-glycerol 1-phosphate + CTP + H(+) = CDP-2,3-bis-O-(geranylgeranyl)-sn-glycerol + diphosphate. Its pathway is membrane lipid metabolism; glycerophospholipid metabolism. Functionally, catalyzes the formation of CDP-2,3-bis-(O-geranylgeranyl)-sn-glycerol (CDP-archaeol) from 2,3-bis-(O-geranylgeranyl)-sn-glycerol 1-phosphate (DGGGP) and CTP. This reaction is the third ether-bond-formation step in the biosynthesis of archaeal membrane lipids. The protein is CDP-archaeol synthase of Methanococcus aeolicus (strain ATCC BAA-1280 / DSM 17508 / OCM 812 / Nankai-3).